Reading from the N-terminus, the 400-residue chain is Formate-dependent phosphoribosylglycinamide formyltransferase (400 aa).

Residues 22 to 23 (EL) and Glu82 contribute to the N(1)-(5-phospho-beta-D-ribosyl)glycinamide site. ATP is bound by residues Arg115, Lys157, 162 to 167 (SSGKGQ), 197 to 200 (EGFV), and Glu205. In terms of domain architecture, ATP-grasp spans 120–315 (RLAAETLGLP…EFELHARAIL (196 aa)). Mg(2+) contacts are provided by Glu274 and Glu286. N(1)-(5-phospho-beta-D-ribosyl)glycinamide is bound by residues Asp293, Lys362, and 369–370 (RR).

This sequence belongs to the PurK/PurT family. As to quaternary structure, homodimer.

The enzyme catalyses N(1)-(5-phospho-beta-D-ribosyl)glycinamide + formate + ATP = N(2)-formyl-N(1)-(5-phospho-beta-D-ribosyl)glycinamide + ADP + phosphate + H(+). It participates in purine metabolism; IMP biosynthesis via de novo pathway; N(2)-formyl-N(1)-(5-phospho-D-ribosyl)glycinamide from N(1)-(5-phospho-D-ribosyl)glycinamide (formate route): step 1/1. In terms of biological role, involved in the de novo purine biosynthesis. Catalyzes the transfer of formate to 5-phospho-ribosyl-glycinamide (GAR), producing 5-phospho-ribosyl-N-formylglycinamide (FGAR). Formate is provided by PurU via hydrolysis of 10-formyl-tetrahydrofolate. The polypeptide is Formate-dependent phosphoribosylglycinamide formyltransferase (Mycolicibacterium vanbaalenii (strain DSM 7251 / JCM 13017 / BCRC 16820 / KCTC 9966 / NRRL B-24157 / PYR-1) (Mycobacterium vanbaalenii)).